A 302-amino-acid chain; its full sequence is Protoheme IX farnesyltransferase (302 aa).

9 helical membrane passes run 27 to 47 (VVAL…PGMV), 53 to 73 (LFGL…NHVI), 100 to 120 (LVFA…AVNV), 121 to 141 (LTAV…TVFL), 149 to 169 (IVWG…AVTG), 175 to 195 (PLLL…ALAI), 215 to 235 (VAFT…VSLV), 237 to 257 (FIIH…GIGF), and 273 to 293 (AMPT…LLLV).

It belongs to the UbiA prenyltransferase family. Protoheme IX farnesyltransferase subfamily.

Its subcellular location is the cell inner membrane. The catalysed reaction is heme b + (2E,6E)-farnesyl diphosphate + H2O = Fe(II)-heme o + diphosphate. It participates in porphyrin-containing compound metabolism; heme O biosynthesis; heme O from protoheme: step 1/1. Its function is as follows. Converts heme B (protoheme IX) to heme O by substitution of the vinyl group on carbon 2 of heme B porphyrin ring with a hydroxyethyl farnesyl side group. The polypeptide is Protoheme IX farnesyltransferase (Thioalkalivibrio sulfidiphilus (strain HL-EbGR7)).